The primary structure comprises 454 residues: Bifunctional protein GlmU (454 aa).

Positions 1-228 (MTLPLHVVIL…PQDVEGANDP (228 aa)) are pyrophosphorylase. UDP-N-acetyl-alpha-D-glucosamine contacts are provided by residues 10–13 (LAAG), Lys-24, Gln-76, 81–82 (GT), 103–105 (YGD), Gly-138, Glu-153, Asn-168, and Asn-226. Asp-105 lines the Mg(2+) pocket. Mg(2+) is bound at residue Asn-226. Residues 229-249 (WQLAQLERAWQLRAARALSLQ) form a linker region. Residues 250 to 454 (GVRMADPARV…IEGWERPTKK (205 aa)) are N-acetyltransferase. Arg-332 and Lys-350 together coordinate UDP-N-acetyl-alpha-D-glucosamine. Residue His-362 is the Proton acceptor of the active site. UDP-N-acetyl-alpha-D-glucosamine contacts are provided by Tyr-365 and Asn-376. Acetyl-CoA contacts are provided by residues Ala-379, 385–386 (NY), Ser-404, Ala-422, and Arg-439.

It in the N-terminal section; belongs to the N-acetylglucosamine-1-phosphate uridyltransferase family. The protein in the C-terminal section; belongs to the transferase hexapeptide repeat family. In terms of assembly, homotrimer. Requires Mg(2+) as cofactor.

The protein localises to the cytoplasm. The enzyme catalyses alpha-D-glucosamine 1-phosphate + acetyl-CoA = N-acetyl-alpha-D-glucosamine 1-phosphate + CoA + H(+). It carries out the reaction N-acetyl-alpha-D-glucosamine 1-phosphate + UTP + H(+) = UDP-N-acetyl-alpha-D-glucosamine + diphosphate. The protein operates within nucleotide-sugar biosynthesis; UDP-N-acetyl-alpha-D-glucosamine biosynthesis; N-acetyl-alpha-D-glucosamine 1-phosphate from alpha-D-glucosamine 6-phosphate (route II): step 2/2. It participates in nucleotide-sugar biosynthesis; UDP-N-acetyl-alpha-D-glucosamine biosynthesis; UDP-N-acetyl-alpha-D-glucosamine from N-acetyl-alpha-D-glucosamine 1-phosphate: step 1/1. It functions in the pathway bacterial outer membrane biogenesis; LPS lipid A biosynthesis. Functionally, catalyzes the last two sequential reactions in the de novo biosynthetic pathway for UDP-N-acetylglucosamine (UDP-GlcNAc). The C-terminal domain catalyzes the transfer of acetyl group from acetyl coenzyme A to glucosamine-1-phosphate (GlcN-1-P) to produce N-acetylglucosamine-1-phosphate (GlcNAc-1-P), which is converted into UDP-GlcNAc by the transfer of uridine 5-monophosphate (from uridine 5-triphosphate), a reaction catalyzed by the N-terminal domain. In Xanthomonas oryzae pv. oryzae (strain MAFF 311018), this protein is Bifunctional protein GlmU.